The sequence spans 169 residues: Gametocyte-specific factor 1-like (169 aa).

CHHC U11-48K-type zinc fingers lie at residues 6–33 (LETC…RRKN) and 40–67 (MASC…VNKS). C9, H15, H25, C29, C43, H49, H59, and C63 together coordinate Zn(2+). Disordered regions lie at residues 67-103 (STME…LPNP) and 131-169 (SDTR…LLKA). A compositionally biased stretch (basic and acidic residues) spans 131 to 158 (SDTRESETDDHNPIPDCPRRRSSDRESE).

It belongs to the UPF0224 (FAM112) family.

The protein is Gametocyte-specific factor 1-like (GTSF1L) of Bos taurus (Bovine).